The primary structure comprises 888 residues: Serine/threonine-protein phosphatase 1 regulatory subunit 10 (888 aa).

The interaction with TOX4 stretch occupies residues 1-348 (MGSGPIDPKE…EPAPPAEPMD (348 aa)). A TFIIS N-terminal domain is found at 73 to 147 (KLLNNWLTYS…SDWMAVIRSQ (75 aa)). Disordered regions lie at residues 147–213 (QSST…STGL), 247–270 (SATA…NTAP), 306–400 (KKKK…KTVT), and 534–853 (VETL…HGGD). 2 stretches are compositionally biased toward basic and acidic residues: residues 153–166 (AEKD…EGKS) and 174–196 (PLTE…EKPK). Lys179 is covalently cross-linked (Glycyl lysine isopeptide (Lys-Gly) (interchain with G-Cter in SUMO2)). The span at 248–258 (ATAAPGDAAPP) shows a compositional bias: low complexity. Lys262 participates in a covalent cross-link: Glycyl lysine isopeptide (Lys-Gly) (interchain with G-Cter in SUMO2). Residue Ser313 is modified to Phosphoserine. Residues 325–334 (KTSTEQSTAK) show a composition bias toward polar residues. Ser382 bears the Phosphoserine mark. Positions 388–417 (QLTRKGRKRKTVTWPEEGKLREYFYFELDE) are necessary for interaction with PPP1CA. Positions 393 to 408 (GRKRKTVTWPEEGKLR) are necessary for interaction with PPP1CC. The PP1-binding motif signature appears at 394 to 423 (RKRKTVTWPEEGKLREYFYFELDETERVNV). Phosphothreonine is present on Thr398. The tract at residues 418 to 619 (TERVNVNKIK…LKQMLVPHGL (202 aa)) is interaction with WDR82. The span at 540–551 (GGSGGSPDGAGG) shows a compositional bias: gly residues. Phosphoserine occurs at positions 545 and 591. The segment covering 583–595 (EILTSIMGSPNSH) has biased composition (polar residues). The segment covering 596–611 (PSEELLKQPDYSDKLK) has biased composition (basic and acidic residues). Over residues 644 to 655 (PPGPGGPMPGPH) the composition is skewed to pro residues. The residue at position 665 (Arg665) is an Omega-N-methylarginine. A compositionally biased stretch (low complexity) spans 674-690 (RGGDPFWDGPGDPMRGG). Omega-N-methylarginine occurs at positions 693 and 737. Gly residues-rich tracts occupy residues 724–762 (ARGG…GSMG) and 784–794 (GPGGNMGGSGG). The span at 811-851 (PHDVPSHRGHDHRGPPPHEHRGHDGHGGGGHRGHDGGHSHG) shows a compositional bias: basic and acidic residues. Residues 854 to 882 (MSNRPVCRHFMMKGNCRYENNCAFYHPGV) form a C3H1-type zinc finger.

As to quaternary structure, component of the PNUTS-PP1 complex (also named PTW/PP1 complex), composed of PPP1R10/PNUTS, TOX4, WDR82, and PPP1CA (or PPP1CB or PPP1CC). Post-translationally, phosphorylated on Ser-398 by PKA within the region necessary for interaction with PPP1CA.

Its subcellular location is the nucleus. The protein resides in the chromosome. In terms of biological role, substrate-recognition component of the PNUTS-PP1 protein phosphatase complex, a protein phosphatase 1 (PP1) complex that promotes RNA polymerase II transcription pause-release, allowing transcription elongation. Promoter-proximal pausing by RNA polymerase II is a transcription halt following transcription initiation but prior to elongation, which acts as a checkpoint to control that transcripts are favorably configured for transcriptional elongation. The PNUTS-PP1 complex mediates the release of RNA polymerase II from promoter-proximal region of genes by catalyzing dephosphorylation of proteins involved in transcription, such as AFF4, CDK9, MEPCE, INTS12, NCBP1, POLR2M/GDOWN1 and SUPT6H. The PNUTS-PP1 complex also regulates RNA polymerase II transcription termination by mediating dephosphorylation of SUPT5H in termination zones downstream of poly(A) sites, thereby promoting deceleration of RNA polymerase II transcription. PNUTS-PP1 complex is also involved in the response to replication stress by mediating dephosphorylation of POLR2A at 'Ser-5' of the CTD, promoting RNA polymerase II degradation. The PNUTS-PP1 complex also plays a role in the control of chromatin structure and cell cycle progression during the transition from mitosis into interphase. PNUTS-PP1 complex mediates dephosphorylation of MYC, promoting MYC stability by preventing MYC ubiquitination by the SCF(FBXW7) complex. In addition to acts as a substrate-recognition component, PPP1R10/PNUTS also acts as a nuclear targeting subunit for the PNUTS-PP1 complex. In some context, PPP1R10/PNUTS also acts as an inhibitor of protein phosphatase 1 (PP1) activity by preventing access to substrates, such as RB. The polypeptide is Serine/threonine-protein phosphatase 1 regulatory subunit 10 (Mus musculus (Mouse)).